The chain runs to 95 residues: Costars family protein At4g33640 (95 aa).

Met1 carries the N-acetylmethionine modification.

The protein belongs to the costars family.

The protein is Costars family protein At4g33640 of Arabidopsis thaliana (Mouse-ear cress).